A 200-amino-acid chain; its full sequence is Exopolysaccharide production protein PSS (200 aa).

It belongs to the bacterial sugar transferase family.

This is Exopolysaccharide production protein PSS (pss) from Rhizobium leguminosarum bv. phaseoli.